The chain runs to 633 residues: DNA mismatch repair protein MutL (633 aa).

Disordered stretches follow at residues 336-364 and 384-405; these read VRPD…GEFG and GWSG…TRPE. Over residues 388-401 the composition is skewed to low complexity; the sequence is GASSSGASSGYSAY.

This sequence belongs to the DNA mismatch repair MutL/HexB family.

Functionally, this protein is involved in the repair of mismatches in DNA. It is required for dam-dependent methyl-directed DNA mismatch repair. May act as a 'molecular matchmaker', a protein that promotes the formation of a stable complex between two or more DNA-binding proteins in an ATP-dependent manner without itself being part of a final effector complex. The chain is DNA mismatch repair protein MutL from Pseudomonas paraeruginosa (strain DSM 24068 / PA7) (Pseudomonas aeruginosa (strain PA7)).